Consider the following 475-residue polypeptide: Sulfate adenylyltransferase subunit 1 (475 aa).

Residues 25–239 enclose the tr-type G domain; the sequence is KSLLRFLTCG…EVLETVEIQR (215 aa). A G1 region spans residues 34-41; that stretch reads GSVDDGKS. Residue 34–41 coordinates GTP; it reads GSVDDGKS. The G2 stretch occupies residues 92-96; that stretch reads GITID. The interval 113–116 is G3; sequence DTPG. GTP is bound by residues 113 to 117 and 168 to 171; these read DTPGH and NKMD. The tract at residues 168–171 is G4; it reads NKMD. The tract at residues 206-208 is G5; sequence SAL.

Belongs to the TRAFAC class translation factor GTPase superfamily. Classic translation factor GTPase family. CysN/NodQ subfamily. Heterodimer composed of CysD, the smaller subunit, and CysN.

It carries out the reaction sulfate + ATP + H(+) = adenosine 5'-phosphosulfate + diphosphate. The protein operates within sulfur metabolism; hydrogen sulfide biosynthesis; sulfite from sulfate: step 1/3. Functionally, with CysD forms the ATP sulfurylase (ATPS) that catalyzes the adenylation of sulfate producing adenosine 5'-phosphosulfate (APS) and diphosphate, the first enzymatic step in sulfur assimilation pathway. APS synthesis involves the formation of a high-energy phosphoric-sulfuric acid anhydride bond driven by GTP hydrolysis by CysN coupled to ATP hydrolysis by CysD. The polypeptide is Sulfate adenylyltransferase subunit 1 (Escherichia coli O17:K52:H18 (strain UMN026 / ExPEC)).